The following is a 492-amino-acid chain: Solute carrier family 2, facilitated glucose transporter member 1 (492 aa).

N-acetylmethionine is present on M1. Residues 1 to 11 (MEPSSKKVTGR) are Cytoplasmic-facing. The helical transmembrane segment at 12–33 (LMLAVGGAVLGSLQFGYNTGVI) threads the bilayer. Over 34-66 (NAPQKVIEEFYNQTWNHRYGESIPSTTLTTLWS) the chain is Extracellular. An N-linked (GlcNAc...) asparagine glycan is attached at N45. Residues 67–87 (LSVAIFSVGGMIGSFSVGLFV) form a helical membrane-spanning segment. Topologically, residues 88-90 (NRF) are cytoplasmic. The chain crosses the membrane as a helical span at residues 91 to 112 (GRRNSMLMMNLLAFVSAVLMGF). The Extracellular portion of the chain corresponds to 113-120 (SKLGKSFE). Residues 121-144 (MLILGRFIIGVYCGLTTGFVPMYV) form a helical membrane-spanning segment. The Cytoplasmic segment spans residues 145–155 (GEVSPTALRGA). Residues 156-176 (LGTLHQLGIVVGILIAQVFGL) traverse the membrane as a helical segment. Q161 is a binding site for D-glucose. At 177–185 (DSIMGNADL) the chain is on the extracellular side. The helical transmembrane segment at 186 to 206 (WPLLLSVIFIPALLQCILLPF) threads the bilayer. The Cytoplasmic segment spans residues 207–271 (CPESPRFLLI…LFRSPAYRQP (65 aa)). Position 226 is a phosphoserine (S226). Residues 272–293 (ILIAVVLQLSQQLSGINAVFYY) form a helical membrane-spanning segment. D-glucose is bound by residues 282 to 283 (QQ) and N288. At 294-306 (STSIFEKAGVQQP) the chain is on the extracellular side. A helical transmembrane segment spans residues 307–328 (VYATIGSGIVNTAFTVVSLFVV). A D-glucose-binding site is contributed by N317. Residues 329–334 (ERAGRR) lie on the Cytoplasmic side of the membrane. The chain crosses the membrane as a helical span at residues 335 to 355 (TLHLIGLAGMAGCAVLMTIAL). The Extracellular portion of the chain corresponds to 356–365 (ALLEQLPWMS). Residues 366–388 (YLSIVAIFGFVAFFEVGPGPIPW) form a helical membrane-spanning segment. D-glucose is bound by residues E380 and W388. The Cytoplasmic portion of the chain corresponds to 389–401 (FIVAELFSQGPRP). The helical transmembrane segment at 402-422 (AAVAVAGFSNWTSNFIVGMCF) threads the bilayer. Topologically, residues 423–429 (QYVEQLC) are extracellular. A helical transmembrane segment spans residues 430–450 (GPYVFIIFTVLLVLFFIFTYF). Residues 451 to 492 (KVPETKGRTFDEIASGFRQGGASQSDKTPEELFHPLGADSQV) lie on the Cytoplasmic side of the membrane. S465 bears the Phosphoserine mark. The segment at 468–492 (RQGGASQSDKTPEELFHPLGADSQV) is disordered. T478 is subject to Phosphothreonine. Position 490 is a phosphoserine (S490).

Belongs to the major facilitator superfamily. Sugar transporter (TC 2.A.1.1) family. Glucose transporter subfamily. As to quaternary structure, found in a complex with ADD2, DMTN and SLC2A1. Interacts (via C-terminus cytoplasmic region) with DMTN. Interacts with SNX27; the interaction is required when endocytosed to prevent degradation in lysosomes and promote recycling to the plasma membrane. Interacts with STOM. Interacts with GIPC (via PDZ domain). Interacts with SGTA (via Gln-rich region). Interacts with isoform 1 of BSG. Interacts with SMIM43; the interaction may promote SLC2A1-mediated glucose transport to meet the energy needs of mesendoderm differentiation. Phosphorylation at Ser-226 by PKC promotes glucose uptake by increasing cell membrane localization. In terms of tissue distribution, detected in osteoblastic cells (at protein level). Detected in brain, and at lower levels in kidney, heart and lung.

Its subcellular location is the cell membrane. The protein localises to the photoreceptor inner segment. It carries out the reaction D-glucose(out) = D-glucose(in). With respect to regulation, the uptake of glucose is inhibited by cytochalasin B. Glucose uptake is increased in response to phorbol ester 12-O-tetradecanoylphorbol-13-acetate (TPA) treatment: TPA-induced glucose uptake requires phosphorylation at Ser-226. Functionally, facilitative glucose transporter, which is responsible for constitutive or basal glucose uptake. Has a very broad substrate specificity; can transport a wide range of aldoses including both pentoses and hexoses. Most important energy carrier of the brain: present at the blood-brain barrier and assures the energy-independent, facilitative transport of glucose into the brain. In association with BSG and NXNL1, promotes retinal cone survival by increasing glucose uptake into photoreceptors. Required for mesendoderm differentiation. This Rattus norvegicus (Rat) protein is Solute carrier family 2, facilitated glucose transporter member 1.